Consider the following 310-residue polypeptide: Phosphoribosylaminoimidazole-succinocarboxamide synthase (310 aa).

Belongs to the SAICAR synthetase family.

It catalyses the reaction 5-amino-1-(5-phospho-D-ribosyl)imidazole-4-carboxylate + L-aspartate + ATP = (2S)-2-[5-amino-1-(5-phospho-beta-D-ribosyl)imidazole-4-carboxamido]succinate + ADP + phosphate + 2 H(+). It participates in purine metabolism; IMP biosynthesis via de novo pathway; 5-amino-1-(5-phospho-D-ribosyl)imidazole-4-carboxamide from 5-amino-1-(5-phospho-D-ribosyl)imidazole-4-carboxylate: step 1/2. The protein is Phosphoribosylaminoimidazole-succinocarboxamide synthase of Stenotrophomonas maltophilia (strain K279a).